The primary structure comprises 273 residues: Dermonecrotic toxin LspaSicTox-alphaIA2iii (273 aa).

Residue H5 is part of the active site. E25 and D27 together coordinate Mg(2+). H41 (nucleophile) is an active-site residue. Cystine bridges form between C45/C51 and C47/C190. Position 85 (D85) interacts with Mg(2+).

It belongs to the arthropod phospholipase D family. Class II subfamily. Mg(2+) is required as a cofactor. In terms of tissue distribution, expressed by the venom gland.

The protein resides in the secreted. The catalysed reaction is an N-(acyl)-sphingosylphosphocholine = an N-(acyl)-sphingosyl-1,3-cyclic phosphate + choline. It catalyses the reaction an N-(acyl)-sphingosylphosphoethanolamine = an N-(acyl)-sphingosyl-1,3-cyclic phosphate + ethanolamine. The enzyme catalyses a 1-acyl-sn-glycero-3-phosphocholine = a 1-acyl-sn-glycero-2,3-cyclic phosphate + choline. It carries out the reaction a 1-acyl-sn-glycero-3-phosphoethanolamine = a 1-acyl-sn-glycero-2,3-cyclic phosphate + ethanolamine. Its function is as follows. Dermonecrotic toxins cleave the phosphodiester linkage between the phosphate and headgroup of certain phospholipids (sphingolipid and lysolipid substrates), forming an alcohol (often choline) and a cyclic phosphate. This toxin acts on sphingomyelin (SM). It may also act on ceramide phosphoethanolamine (CPE), lysophosphatidylcholine (LPC) and lysophosphatidylethanolamine (LPE), but not on lysophosphatidylserine (LPS), and lysophosphatidylglycerol (LPG). It acts by transphosphatidylation, releasing exclusively cyclic phosphate products as second products. Induces dermonecrosis, hemolysis, increased vascular permeability, edema, inflammatory response, and platelet aggregation. This chain is Dermonecrotic toxin LspaSicTox-alphaIA2iii, found in Loxosceles spadicea (Recluse spider).